We begin with the raw amino-acid sequence, 129 residues long: Small ribosomal subunit protein uS11 (129 aa).

It belongs to the universal ribosomal protein uS11 family. Part of the 30S ribosomal subunit. Interacts with proteins S7 and S18. Binds to IF-3.

Located on the platform of the 30S subunit, it bridges several disparate RNA helices of the 16S rRNA. Forms part of the Shine-Dalgarno cleft in the 70S ribosome. In Novosphingobium aromaticivorans (strain ATCC 700278 / DSM 12444 / CCUG 56034 / CIP 105152 / NBRC 16084 / F199), this protein is Small ribosomal subunit protein uS11.